The sequence spans 225 residues: Ribosomal RNA small subunit methyltransferase G (225 aa).

Residues Gly62, 113-114, and Lys130 contribute to the S-adenosyl-L-methionine site; that span reads AE.

The protein belongs to the methyltransferase superfamily. RNA methyltransferase RsmG family.

It localises to the cytoplasm. Its function is as follows. Specifically methylates the N7 position of a guanine in 16S rRNA. This Petrotoga mobilis (strain DSM 10674 / SJ95) protein is Ribosomal RNA small subunit methyltransferase G.